Here is a 97-residue protein sequence, read N- to C-terminus: MANSKSALKRIRTSERNRLRNKSYKSAVRTLMKKYLQAVEEYAASPTPENKAVVDQRMSAAYSKIDKAVKRSVLHRNNGARKKARLAKALQQVASAS.

The tract at residues 1–22 (MANSKSALKRIRTSERNRLRNK) is disordered.

This sequence belongs to the bacterial ribosomal protein bS20 family.

Its function is as follows. Binds directly to 16S ribosomal RNA. The chain is Small ribosomal subunit protein bS20 from Crocosphaera subtropica (strain ATCC 51142 / BH68) (Cyanothece sp. (strain ATCC 51142)).